Reading from the N-terminus, the 414-residue chain is Protein SOSEKI 2 (414 aa).

Residues 44 to 135 (RRVQVVYYLT…YVLKGSEITD (92 aa)) form a DIX-like oligomerization domain region. The tract at residues 171 to 273 (SFDDAELYVG…GDPVEPGSGR (103 aa)) is disordered. A compositionally biased stretch (acidic residues) spans 173-192 (DDAELYVGEEEEEEDGEYEL). Positions 205–229 (PQSRCSRGVSTETMESTEQKPNLTK) are enriched in polar residues. Residues 230 to 242 (TEQDLQVRSDSSD) are compositionally biased toward basic and acidic residues. The Association to cell membranes motif lies at 283-284 (CG).

Belongs to the SOSEKI family. Homodimer. Forms long polymer filaments with other SOKs proteins polymers (e.g. SOK1, SOK2, SOK3 and SOK4) crucial for polar localization and biological activity. Binds to ANGUSTIFOLIA (AN). As to expression, expressed during embryogenesis and in roots.

The protein localises to the cell membrane. Functionally, part of a three-gene cluster containing FLC, UFC and DFC, which is coordinately regulated in response to vernalization. Also regulated by FLX. SOSEKI proteins (SOK1-5) locally interpret global polarity cues and can influence cell division orientation to coordinate cell polarization relative to body axes, probably by guiding ANGUSTIFOLIA (AN) polarized localization. The chain is Protein SOSEKI 2 from Arabidopsis thaliana (Mouse-ear cress).